The following is a 66-amino-acid chain: Putative inactive (E)-beta-ocimene synthase, chloroplastic (66 aa).

The transit peptide at 1–25 (MAAHNLCFNSAFVCNVHHQKTQHFP) directs the protein to the chloroplast.

Belongs to the terpene synthase family. Tpsb subfamily. Expressed exclusively in flowers.

It localises to the plastid. Its subcellular location is the chloroplast. The chain is Putative inactive (E)-beta-ocimene synthase, chloroplastic (TPS02) from Arabidopsis thaliana (Mouse-ear cress).